The sequence spans 518 residues: MIFVLLSAVLLGVFTYSVWIWSYFIRKGIKGPRGFPGIGMLIQTIDHENPPFLKYRDWTKQYGPVYGFTEGPQQTMIISEPEMVNEIFKKQFDNFYGRKLRPIIGDPEKDKRVNIFSTQGKRWKRLRTLSSPSFSNNSLRKVRNSVQECGTEILWNIEQKVRKNEDIDMLIVYQEYTLGVISRIALGQSESNMFKNPLLPKVQAIFNGSWHVFLITGIFPPLAGVFRKMSKMLPASFIPAFKIFDLIEVAVQARIDQRAKDEIKGVEPGEPQDFIDLFLDARVPDVKILSGEANEDFAKSSVVKINKELTFDEIIAQCFVFLAAGFDTTALSLSYATYLLATHPEIQTKLQEEVDRECPDPEIFFDHLSKLKYLECVMKETLRLYPLGTTANTRKCMRETTINGVNFDEGMNIQVDTWTLHHNPRIWGEDVEDFKPERWENGACEHLEHNGSYIPFGSGPRQCIGMRLAQMEQKILLAQILKEYSFRTTKNTQIPVKLVGKLTLSPESVIVKLEPRDS.

Cysteine 463 contributes to the heme binding site.

Belongs to the cytochrome P450 family. The cofactor is heme.

Its function is as follows. Cytochromes P450 are a group of heme-thiolate monooxygenases. They oxidize a variety of structurally unrelated compounds, including steroids, fatty acids, and xenobiotics. This chain is Putative cytochrome P450 CYP13A6 (cyp-13A6), found in Caenorhabditis elegans.